Here is a 317-residue protein sequence, read N- to C-terminus: Beta-ketoacyl-[acyl-carrier-protein] synthase III (317 aa).

Active-site residues include C112 and H244. Positions 245–249 (QANLR) are ACP-binding. N274 is a catalytic residue.

The protein belongs to the thiolase-like superfamily. FabH family. In terms of assembly, homodimer.

It is found in the cytoplasm. It carries out the reaction malonyl-[ACP] + acetyl-CoA + H(+) = 3-oxobutanoyl-[ACP] + CO2 + CoA. Its pathway is lipid metabolism; fatty acid biosynthesis. Catalyzes the condensation reaction of fatty acid synthesis by the addition to an acyl acceptor of two carbons from malonyl-ACP. Catalyzes the first condensation reaction which initiates fatty acid synthesis and may therefore play a role in governing the total rate of fatty acid production. Possesses both acetoacetyl-ACP synthase and acetyl transacylase activities. Its substrate specificity determines the biosynthesis of branched-chain and/or straight-chain of fatty acids. This is Beta-ketoacyl-[acyl-carrier-protein] synthase III from Salmonella arizonae (strain ATCC BAA-731 / CDC346-86 / RSK2980).